A 310-amino-acid polypeptide reads, in one-letter code: MESNQTWITEVILLGFQVDPALELFLFGFFLLFYSLTLMGNGIILGLIYLDSRLHTPMYVFLSHLAIVDMSYASSTVPKMLANLVMHKKVISFAPCILQTFLYLAFAITECLILVMMCYDRYVAICHPLQYTLIMNWRVCTVLASTCWIFSFLLALVHITLILRLPFCGPQKINHFFCQIMSVFKLACADTRLNQVVLFAGSAFILVGPLCLVLVSYLHILVAILRIQSGEGRRKAFSTCSSHLCVVGLFFGSAIVMYMAPKSSHSQERRKILSLFYSLFNPILNPLIYSLRNAEVKGALKRVLWKQRSM.

The Extracellular segment spans residues 1-24 (MESNQTWITEVILLGFQVDPALEL). Residue asparagine 4 is glycosylated (N-linked (GlcNAc...) asparagine). The chain crosses the membrane as a helical span at residues 25–48 (FLFGFFLLFYSLTLMGNGIILGLI). The Cytoplasmic segment spans residues 49–56 (YLDSRLHT). The chain crosses the membrane as a helical span at residues 57–78 (PMYVFLSHLAIVDMSYASSTVP). Over 79–99 (KMLANLVMHKKVISFAPCILQ) the chain is Extracellular. Cysteine 96 and cysteine 188 are joined by a disulfide. A helical membrane pass occupies residues 100-119 (TFLYLAFAITECLILVMMCY). Residues 120 to 138 (DRYVAICHPLQYTLIMNWR) lie on the Cytoplasmic side of the membrane. A helical transmembrane segment spans residues 139–157 (VCTVLASTCWIFSFLLALV). Residues 158 to 194 (HITLILRLPFCGPQKINHFFCQIMSVFKLACADTRLN) are Extracellular-facing. Residues 195 to 218 (QVVLFAGSAFILVGPLCLVLVSYL) form a helical membrane-spanning segment. Residues 219–235 (HILVAILRIQSGEGRRK) lie on the Cytoplasmic side of the membrane. Residues 236-258 (AFSTCSSHLCVVGLFFGSAIVMY) traverse the membrane as a helical segment. The Extracellular portion of the chain corresponds to 259–271 (MAPKSSHSQERRK). A helical transmembrane segment spans residues 272-291 (ILSLFYSLFNPILNPLIYSL). The Cytoplasmic segment spans residues 292–310 (RNAEVKGALKRVLWKQRSM).

The protein belongs to the G-protein coupled receptor 1 family.

The protein resides in the cell membrane. In terms of biological role, odorant receptor. The sequence is that of Olfactory receptor 2A12 (OR2A12) from Homo sapiens (Human).